The following is an 80-amino-acid chain: uncharacterized protein (80 aa).

This is an uncharacterized protein from Vaccinia virus (strain Western Reserve) (VACV).